The primary structure comprises 347 residues: NADH-quinone oxidoreductase subunit H (347 aa).

8 helical membrane passes run 21-41, 87-107, 120-140, 160-180, 194-214, 259-279, 282-302, and 324-344; these read IAGI…IIYA, GLFL…WAVI, VGLL…VIAG, ISYE…AGTF, WIIN…MFLI, LLMC…PLDI, LYLV…FFIF, and VFLP…MATG.

It belongs to the complex I subunit 1 family. As to quaternary structure, NDH-1 is composed of 14 different subunits. Subunits NuoA, H, J, K, L, M, N constitute the membrane sector of the complex.

It localises to the cell inner membrane. It carries out the reaction a quinone + NADH + 5 H(+)(in) = a quinol + NAD(+) + 4 H(+)(out). Functionally, NDH-1 shuttles electrons from NADH, via FMN and iron-sulfur (Fe-S) centers, to quinones in the respiratory chain. The immediate electron acceptor for the enzyme in this species is believed to be ubiquinone. Couples the redox reaction to proton translocation (for every two electrons transferred, four hydrogen ions are translocated across the cytoplasmic membrane), and thus conserves the redox energy in a proton gradient. This subunit may bind ubiquinone. In Novosphingobium aromaticivorans (strain ATCC 700278 / DSM 12444 / CCUG 56034 / CIP 105152 / NBRC 16084 / F199), this protein is NADH-quinone oxidoreductase subunit H.